Here is a 295-residue protein sequence, read N- to C-terminus: 33 kDa chaperonin (295 aa).

Cystine bridges form between Cys-233–Cys-235 and Cys-267–Cys-270.

This sequence belongs to the HSP33 family. In terms of processing, under oxidizing conditions two disulfide bonds are formed involving the reactive cysteines. Under reducing conditions zinc is bound to the reactive cysteines and the protein is inactive.

It localises to the cytoplasm. Redox regulated molecular chaperone. Protects both thermally unfolding and oxidatively damaged proteins from irreversible aggregation. Plays an important role in the bacterial defense system toward oxidative stress. This is 33 kDa chaperonin from Mannheimia succiniciproducens (strain KCTC 0769BP / MBEL55E).